The following is a 379-amino-acid chain: Pectin lyase A (379 aa).

The signal sequence occupies residues 1 to 20 (MKYSTIFSAAAAVFAGSAAA). 2 cysteine pairs are disulfide-bonded: Cys83-Cys102 and Cys92-Cys226. The O-linked (Man) threonine glycan is linked to Thr88. Asn129 is a glycosylation site (N-linked (GlcNAc...) asparagine). Residue Arg256 is part of the active site. Cysteines 322 and 330 form a disulfide. Residue Ser368 is glycosylated (O-linked (Man) serine; in strain 4M-147).

This sequence belongs to the polysaccharide lyase 1 family. In terms of processing, N-glycosylated at Asn-129 and O-glycosylated at Thr-88 when expressed in Aspergillus nidulans. The protein from strain 4M-147 is O-glycosylated at Thr-88 and Ser-368. PubMed:9195887 modeled GalNAc at the O-glycosylation site, a glycosylation not observed in fungi. The O-linked saccharide is probably mannose.

Its subcellular location is the secreted. The catalysed reaction is Eliminative cleavage of (1-&gt;4)-alpha-D-galacturonan methyl ester to give oligosaccharides with 4-deoxy-6-O-methyl-alpha-D-galact-4-enuronosyl groups at their non-reducing ends.. Its function is as follows. Pectinolytic enzymes consist of four classes of enzymes: pectin lyase, polygalacturonase, pectin methylesterase and rhamnogalacturonase. Among pectinolytic enzymes, pectin lyase is the most important in depolymerization of pectin, since it cleaves internal glycosidic bonds of highly methylated pectins. In Aspergillus niger, this protein is Pectin lyase A (pelA).